A 946-amino-acid chain; its full sequence is RIPOR family member 3 (946 aa).

A phosphoserine mark is found at Ser9, Ser24, and Ser340. A Phosphothreonine modification is found at Thr345. A phosphoserine mark is found at Ser351 and Ser384. The tract at residues 390–512 is disordered; it reads GPSLRSQSQE…GDREDGPGVA (123 aa). A compositionally biased stretch (basic and acidic residues) spans 437–446; that stretch reads SIEEEAREDP. The segment covering 478–495 has biased composition (polar residues); the sequence is SLPQGSLFHSGTASSSQN. The span at 496–508 shows a compositional bias: basic and acidic residues; it reads GHEEGATGDREDG.

It belongs to the RIPOR family.

The chain is RIPOR family member 3 from Homo sapiens (Human).